The primary structure comprises 119 residues: uncharacterized protein (119 aa).

Its subcellular location is the mitochondrion. This is an uncharacterized protein from Arabidopsis thaliana (Mouse-ear cress).